Consider the following 876-residue polypeptide: DNA mismatch repair protein MutS (876 aa).

Position 626 to 633 (626 to 633) interacts with ATP; that stretch reads GPNMGGKS.

The protein belongs to the DNA mismatch repair MutS family.

In terms of biological role, this protein is involved in the repair of mismatches in DNA. It is possible that it carries out the mismatch recognition step. This protein has a weak ATPase activity. This is DNA mismatch repair protein MutS from Bordetella bronchiseptica (strain ATCC BAA-588 / NCTC 13252 / RB50) (Alcaligenes bronchisepticus).